The chain runs to 432 residues: Golgin subfamily A member 6-like protein 9 (432 aa).

A compositionally biased stretch (pro residues) spans 1–11 (MWPQPRLPPHP). Disordered regions lie at residues 1–77 (MWPQ…YGEG) and 349–411 (KELE…AGGA). A compositionally biased stretch (polar residues) spans 51–62 (NGSSPDTFTSGG). Positions 157–354 (SKMEQLQDET…EQQVKELEKS (198 aa)) form a coiled coil. Positions 349–362 (KELEKSGGAEEPRG) are enriched in basic and acidic residues. The span at 366–381 (AAAARPVAGAPVPQGA) shows a compositional bias: low complexity.

This sequence belongs to the GOLGA6 family.

The sequence is that of Golgin subfamily A member 6-like protein 9 from Homo sapiens (Human).